Consider the following 325-residue polypeptide: Outer spore wall protein LDS1 (325 aa).

Over 1–91 (MSFTGSLALA…NTNKSSYSTT (91 aa)) the chain is Cytoplasmic. Residues 92-112 (MLGILSSYLIMFALVSFVYWA) form a helical membrane-spanning segment. Residues 113 to 118 (TITPMY) lie on the Extracellular side of the membrane. A helical transmembrane segment spans residues 119-139 (TAFLIVLGPIGLFIAIFHSFL). Residues 140 to 208 (QANVFTLLFM…VKYMLGLSVL (69 aa)) are Cytoplasmic-facing. Residues 209–229 (FVLLVISFFPLIGPILFHILI) form a helical membrane-spanning segment. Residues 230–263 (SPFITQIYFTKVLRLQNFDNIQRRENIYLHAGQY) lie on the Extracellular side of the membrane. A helical transmembrane segment spans residues 264 to 284 (ASFGFLAGLIESVPILAGFAI). At 285-325 (STNTIGSVLFNLDHPMVPENLVETQAEIEAAPQDINQQPNQ) the chain is on the cytoplasmic side.

Belongs to the LDS family.

The protein resides in the prospore membrane. The protein localises to the lipid droplet. Its subcellular location is the spore wall. In terms of biological role, involved in spore wall assembly. This chain is Outer spore wall protein LDS1, found in Saccharomyces cerevisiae (strain ATCC 204508 / S288c) (Baker's yeast).